Here is a 307-residue protein sequence, read N- to C-terminus: 4-hydroxy-tetrahydrodipicolinate synthase (307 aa).

Ser57 is a binding site for pyruvate. Tyr145 serves as the catalytic Proton donor/acceptor. Lys173 acts as the Schiff-base intermediate with substrate in catalysis. Position 219 (Ile219) interacts with pyruvate.

Belongs to the DapA family. In terms of assembly, homotetramer; dimer of dimers.

The protein localises to the cytoplasm. It catalyses the reaction L-aspartate 4-semialdehyde + pyruvate = (2S,4S)-4-hydroxy-2,3,4,5-tetrahydrodipicolinate + H2O + H(+). It participates in amino-acid biosynthesis; L-lysine biosynthesis via DAP pathway; (S)-tetrahydrodipicolinate from L-aspartate: step 3/4. Its function is as follows. Catalyzes the condensation of (S)-aspartate-beta-semialdehyde [(S)-ASA] and pyruvate to 4-hydroxy-tetrahydrodipicolinate (HTPA). The protein is 4-hydroxy-tetrahydrodipicolinate synthase of Polynucleobacter asymbioticus (strain DSM 18221 / CIP 109841 / QLW-P1DMWA-1) (Polynucleobacter necessarius subsp. asymbioticus).